The sequence spans 521 residues: MADQQLGVLKALDVAKTQLYHFTAIVIAGMGFFTDAYDLFCVSLVTKLLGRLYYFNPTSAKPGSLPPHVAAAVNGVALCGTLAGQLFFGWLGDKLGRKKVYGITLIMMILCSVASGLSLGNSAKGVMTTLCFFRFWLGFGIGGDYPLSATIMSEYANKKTRGAFIAAVFAMQGVGILAGGFVALAVSSIFDKKFPSPTYEQDRFLSTPPQADYIWRIIVMFGALPAALTYYWRMKMPETARYTALVAKNIKQATADMSKVLQTDLELEERVEDDVKDPKKNYGLFSKEFLRRHGLHLLGTTSTWFLLDIAFYSQNLFQKDIFSAIGWIPKAATMNAIHEVFKIARAQTLIALCSTVPGYWFTVAFIDIIGRFAIQLMGFFMMTVFMFAIAFPYNHWILPDNRIGFVVMYSLTFFFANFGPNATTFIVPAEIFPARLRSTCHGISAATGKAGAIVGAFGFLYAAQPQDKTKTDAGYPPGIGVKNSLIMLGVINFVGMLFTFLVPEPKGKSLEELSGEAEVDK.

Over 1-24 (MADQQLGVLKALDVAKTQLYHFTA) the chain is Cytoplasmic. Residues 25 to 45 (IVIAGMGFFTDAYDLFCVSLV) form a helical membrane-spanning segment. The Extracellular portion of the chain corresponds to 46–70 (TKLLGRLYYFNPTSAKPGSLPPHVA). A helical transmembrane segment spans residues 71–91 (AAVNGVALCGTLAGQLFFGWL). Residues 92–99 (GDKLGRKK) lie on the Cytoplasmic side of the membrane. A helical transmembrane segment spans residues 100–120 (VYGITLIMMILCSVASGLSLG). Residues 121–131 (NSAKGVMTTLC) are Extracellular-facing. A helical membrane pass occupies residues 132–152 (FFRFWLGFGIGGDYPLSATIM). The Cytoplasmic segment spans residues 153-161 (SEYANKKTR). The helical transmembrane segment at 162–182 (GAFIAAVFAMQGVGILAGGFV) threads the bilayer. The Extracellular segment spans residues 183–211 (ALAVSSIFDKKFPSPTYEQDRFLSTPPQA). A helical transmembrane segment spans residues 212-232 (DYIWRIIVMFGALPAALTYYW). Topologically, residues 233–292 (RMKMPETARYTALVAKNIKQATADMSKVLQTDLELEERVEDDVKDPKKNYGLFSKEFLRR) are cytoplasmic. The chain crosses the membrane as a helical span at residues 293-313 (HGLHLLGTTSTWFLLDIAFYS). Topologically, residues 314 to 348 (QNLFQKDIFSAIGWIPKAATMNAIHEVFKIARAQT) are extracellular. The helical transmembrane segment at 349-369 (LIALCSTVPGYWFTVAFIDII) threads the bilayer. The Cytoplasmic segment spans residues 370-371 (GR). The chain crosses the membrane as a helical span at residues 372-392 (FAIQLMGFFMMTVFMFAIAFP). Over 393–402 (YNHWILPDNR) the chain is Extracellular. A helical membrane pass occupies residues 403-423 (IGFVVMYSLTFFFANFGPNAT). Over 424–441 (TFIVPAEIFPARLRSTCH) the chain is Cytoplasmic. Residues 442 to 462 (GISAATGKAGAIVGAFGFLYA) form a helical membrane-spanning segment. Over 463-484 (AQPQDKTKTDAGYPPGIGVKNS) the chain is Extracellular. A helical transmembrane segment spans residues 485–505 (LIMLGVINFVGMLFTFLVPEP). Over 506–521 (KGKSLEELSGEAEVDK) the chain is Cytoplasmic.

This sequence belongs to the major facilitator superfamily. Phosphate:H(+) symporter (TC 2.A.1.9) family. Mainly expressed in roots, especially in the stele of the primary root, the pericycle and trichoblasts of secondary roots. To a lower extent, present in hydathodes and vascular tissues of young leaves.

The protein localises to the membrane. Functionally, high-affinity transporter for external inorganic phosphate. This Arabidopsis thaliana (Mouse-ear cress) protein is Probable inorganic phosphate transporter 1-3 (PHT1-3).